A 231-amino-acid chain; its full sequence is Regulatory factor X-associated protein (231 aa).

Positions 1 to 163 (MEAQAVPEGS…GNVKLEESTD (163 aa)) are disordered. Over residues 50–65 (ADAEDEAGDDDADLLD) the composition is skewed to acidic residues. The span at 115–138 (KQRKPWMCKKHRNKMYKDKYKKKK) shows a compositional bias: basic residues. The short motif at 123-138 (KKHRNKMYKDKYKKKK) is the Nuclear localization signal element. Residue K157 forms a Glycyl lysine isopeptide (Lys-Gly) (interchain with G-Cter in SUMO2) linkage.

In terms of assembly, RFX consists of at least 3 different subunits; RFXAP, RFX5 and RFX-B/RFXANK; with each subunit representing a separate complementation group. RFX forms cooperative DNA binding complexes with X2BP and CBF/NF-Y. RFX associates with CIITA to form an active transcriptional complex. Post-translationally, phosphorylated.

The protein resides in the nucleus. Functionally, part of the RFX complex that binds to the X-box of MHC II promoters. The polypeptide is Regulatory factor X-associated protein (Rfxap) (Mus musculus (Mouse)).